Reading from the N-terminus, the 343-residue chain is Mediator of RNA polymerase II transcription subunit 2 (343 aa).

Disordered regions lie at residues 105-141 (KQQQEEEQRRKHQAELEKNKRQQEHDAATKAAAAQQL) and 252-277 (STNEASTNNRNNDGTGGASNPRISSN). The segment covering 107 to 132 (QQEEEQRRKHQAELEKNKRQQEHDAA) has biased composition (basic and acidic residues). A compositionally biased stretch (polar residues) spans 252–264 (STNEASTNNRNND).

This sequence belongs to the Mediator complex subunit 2 family. Component of the Mediator complex.

It localises to the nucleus. Its function is as follows. Component of the Mediator complex, a coactivator involved in the regulated transcription of nearly all RNA polymerase II-dependent genes. Mediator functions as a bridge to convey information from gene-specific regulatory proteins to the basal RNA polymerase II transcription machinery. Mediator is recruited to promoters by direct interactions with regulatory proteins and serves as a scaffold for the assembly of a functional preinitiation complex with RNA polymerase II and the general transcription factors. The sequence is that of Mediator of RNA polymerase II transcription subunit 2 (MED2) from Eremothecium gossypii (strain ATCC 10895 / CBS 109.51 / FGSC 9923 / NRRL Y-1056) (Yeast).